Here is a 1802-residue protein sequence, read N- to C-terminus: U3 small nucleolar RNA-associated protein 10 (1802 aa).

Residues 581 to 618 (MDLQALLPFVLVTLADPSERVRREAAGILTIIGSLHKN) form an HEAT 1 repeat. Helical transmembrane passes span 946–966 (VQSGMSYLLSLALGSLLAIVN) and 1002–1022 (ALLLVAGLSVIAPELVLHSVM). HEAT repeat units lie at residues 1046 to 1083 (QTIDQVVPALIQSLRNQKRDVVSGTSELLLSFTAAFEH), 1253 to 1290 (LSLVDFLDTIEVLLQRPNDELRRKVLRLLEGRLRQNPE), 1297 to 1335 (TRMLDFLSVLVKIVESSPDILLKHAAVACIDRIADKYGK), and 1758 to 1795 (ALLPEMLPYISELMEDEDENVEKEVRKWVKQIEDVLGE).

The protein belongs to the HEATR1/UTP10 family. As to quaternary structure, component of the ribosomal small subunit (SSU) processome.

The protein resides in the nucleus. Its subcellular location is the nucleolus. It is found in the membrane. Involved in nucleolar processing of pre-18S ribosomal RNA. Involved in ribosome biosynthesis. The sequence is that of U3 small nucleolar RNA-associated protein 10 from Aspergillus oryzae (strain ATCC 42149 / RIB 40) (Yellow koji mold).